Here is a 120-residue protein sequence, read N- to C-terminus: Kidney androgen-regulated protein (120 aa).

The signal sequence occupies residues 1-18; that stretch reads MMICKVLVITVFCVLTVA.

It is found in the secreted. In Rattus norvegicus (Rat), this protein is Kidney androgen-regulated protein (Kap).